A 1017-amino-acid polypeptide reads, in one-letter code: Formin-binding protein 4 (1017 aa).

Disordered stretches follow at residues 1–141 (MGKK…STDI) and 160–202 (PAAP…TSGW). A Phosphoserine modification is found at serine 18. Over residues 40 to 69 (DSTAAVPSQPAPSAATTTTTAVTAAAASDD) the composition is skewed to low complexity. A phosphoserine mark is found at serine 116 and serine 124. Positions 130-141 (SKETNGNQSTDI) are enriched in polar residues. A Phosphothreonine modification is found at threonine 172. Over residues 181–200 (AATSTLSSSTSNGTDSTQTS) the composition is skewed to low complexity. The region spanning 214–248 (GIEMGDWQEVWDENTGCYYYWNTQTNEVTWELPQY) is the WW 1 domain. Lysine 290 carries the post-translational modification N6-acetyllysine. Lysine 301 is covalently cross-linked (Glycyl lysine isopeptide (Lys-Gly) (interchain with G-Cter in SUMO1)). Lysine 335 participates in a covalent cross-link: Glycyl lysine isopeptide (Lys-Gly) (interchain with G-Cter in SUMO2). A Glycyl lysine isopeptide (Lys-Gly) (interchain with G-Cter in SUMO1); alternate cross-link involves residue lysine 348. Residue lysine 348 forms a Glycyl lysine isopeptide (Lys-Gly) (interchain with G-Cter in SUMO2); alternate linkage. Disordered regions lie at residues 421 to 519 (LEEG…TTPK), 621 to 676 (ESQW…CKES), 706 to 792 (PLPL…IKRK), and 899 to 994 (TATI…AERN). Phosphoserine is present on residues serine 427, serine 432, serine 435, serine 438, and serine 442. Positions 428 to 442 (VSGSSPRSDISQPAS) are enriched in polar residues. The segment covering 449–458 (LMSKRGKWKM) has biased composition (basic residues). Residues 461 to 474 (RATSPESTSRSSSK) show a composition bias toward low complexity. Serine 464 carries the phosphoserine modification. The residue at position 479 (threonine 479) is a Phosphothreonine. Basic and acidic residues predominate over residues 491-513 (NSEKIDENSDKEMEVEESPEKIK). 2 positions are modified to phosphoserine: serine 499 and serine 508. Phosphothreonine occurs at positions 516 and 517. Lysine 519 participates in a covalent cross-link: Glycyl lysine isopeptide (Lys-Gly) (interchain with G-Cter in SUMO1); alternate. Lysine 519 is covalently cross-linked (Glycyl lysine isopeptide (Lys-Gly) (interchain with G-Cter in SUMO2); alternate). One can recognise a WW 2 domain in the interval 595-629 (NATPKGWSCHWDRDHRRYFYVNEQSGESQWEFPDG). The span at 627–637 (PDGEEEEEESQ) shows a compositional bias: acidic residues. The span at 640 to 656 (ENRDETLAKQTLKDKTG) shows a compositional bias: basic and acidic residues. The span at 657-671 (TDSNSTESSETSTGS) shows a compositional bias: low complexity. Positions 706–732 (PLPLEMPPPPPPPPESPPPPPPPPPPA) are enriched in pro residues. Positions 733 to 748 (EDGEIQEVEMEDEGSE) are enriched in acidic residues. Residues 764–786 (SAQTTVVTSQSSVDSTISSSSST) show a composition bias toward low complexity. Positions 904-925 (EPPPPPPPPPPPPPPAPKMPPP) are enriched in pro residues. Basic residues predominate over residues 929–941 (KKGRKDKAKKSKT). A compositionally biased stretch (acidic residues) spans 957–970 (LDEEDNSSSSEEDR). A phosphoserine mark is found at serine 963, serine 964, and serine 965. Residues 971-982 (ESTAQKRIEEWK) show a composition bias toward basic and acidic residues.

Binds FMN1. Interacts with the Arg/Gly-rich-flanked Pro-rich of KHDRBS1/SAM68. Arginine methylation in these regions has no effect on this binding. In terms of tissue distribution, highly expressed in the eye.

In Homo sapiens (Human), this protein is Formin-binding protein 4 (FNBP4).